A 595-amino-acid polypeptide reads, in one-letter code: Aspartate--tRNA ligase (595 aa).

Position 173 (E173) interacts with L-aspartate. Residues 197–200 (QLFK) are aspartate. R219 is a binding site for L-aspartate. ATP-binding positions include 219 to 221 (RDE) and Q228. H449 lines the L-aspartate pocket. ATP is bound at residue E483. R490 provides a ligand contact to L-aspartate. ATP is bound at residue 535–538 (GLDR).

It belongs to the class-II aminoacyl-tRNA synthetase family. Type 1 subfamily. As to quaternary structure, homodimer.

The protein localises to the cytoplasm. The enzyme catalyses tRNA(Asp) + L-aspartate + ATP = L-aspartyl-tRNA(Asp) + AMP + diphosphate. Its function is as follows. Catalyzes the attachment of L-aspartate to tRNA(Asp) in a two-step reaction: L-aspartate is first activated by ATP to form Asp-AMP and then transferred to the acceptor end of tRNA(Asp). The chain is Aspartate--tRNA ligase from Shewanella woodyi (strain ATCC 51908 / MS32).